The primary structure comprises 74 residues: Protein SMIM7 homolog (74 aa).

A helical membrane pass occupies residues 53 to 73 (FRAFIGLWNIFIMFLMLVFFG).

This sequence belongs to the SMIM7 family.

The protein localises to the membrane. This chain is Protein SMIM7 homolog, found in Ixodes scapularis (Black-legged tick).